We begin with the raw amino-acid sequence, 253 residues long: GTP cyclohydrolase 1 type 2 homolog (253 aa).

H64, H65, D101, H222, and E226 together coordinate a divalent metal cation.

It belongs to the GTP cyclohydrolase I type 2/NIF3 family. In terms of assembly, homohexamer.

This is GTP cyclohydrolase 1 type 2 homolog from Halobacterium salinarum (strain ATCC 700922 / JCM 11081 / NRC-1) (Halobacterium halobium).